A 445-amino-acid polypeptide reads, in one-letter code: UDP-N-acetylmuramate--L-alanine ligase (445 aa).

108 to 114 (GSDGKTT) provides a ligand contact to ATP.

Belongs to the MurCDEF family.

The protein localises to the cytoplasm. It carries out the reaction UDP-N-acetyl-alpha-D-muramate + L-alanine + ATP = UDP-N-acetyl-alpha-D-muramoyl-L-alanine + ADP + phosphate + H(+). It participates in cell wall biogenesis; peptidoglycan biosynthesis. Its function is as follows. Cell wall formation. The sequence is that of UDP-N-acetylmuramate--L-alanine ligase from Pseudothermotoga lettingae (strain ATCC BAA-301 / DSM 14385 / NBRC 107922 / TMO) (Thermotoga lettingae).